The sequence spans 385 residues: O-phospho-L-seryl-tRNA:Cys-tRNA synthase (385 aa).

Pyridoxal 5'-phosphate-binding positions include 89-90, N195, and 218-220; these read AR and SGH. At K221 the chain carries N6-(pyridoxal phosphate)lysine.

The protein belongs to the SepCysS family. Homodimer. Interacts with SepRS. Pyridoxal 5'-phosphate serves as cofactor.

The enzyme catalyses O-phospho-L-seryl-tRNA(Cys) + hydrogen sulfide + H(+) = L-cysteinyl-tRNA(Cys) + phosphate. Converts O-phospho-L-seryl-tRNA(Cys) (Sep-tRNA(Cys)) to L-cysteinyl-tRNA(Cys) (Cys-tRNA(Cys)). This is O-phospho-L-seryl-tRNA:Cys-tRNA synthase from Methanococcus aeolicus (strain ATCC BAA-1280 / DSM 17508 / OCM 812 / Nankai-3).